The chain runs to 341 residues: tRNA N6-adenosine threonylcarbamoyltransferase (341 aa).

2 residues coordinate Fe cation: H112 and H116. Substrate-binding positions include 134-138 (LASGG), D167, G180, and N279. D307 serves as a coordination point for Fe cation.

Belongs to the KAE1 / TsaD family. It depends on Fe(2+) as a cofactor.

The protein localises to the cytoplasm. The enzyme catalyses L-threonylcarbamoyladenylate + adenosine(37) in tRNA = N(6)-L-threonylcarbamoyladenosine(37) in tRNA + AMP + H(+). Its function is as follows. Required for the formation of a threonylcarbamoyl group on adenosine at position 37 (t(6)A37) in tRNAs that read codons beginning with adenine. Is involved in the transfer of the threonylcarbamoyl moiety of threonylcarbamoyl-AMP (TC-AMP) to the N6 group of A37, together with TsaE and TsaB. TsaD likely plays a direct catalytic role in this reaction. In Rickettsia bellii (strain OSU 85-389), this protein is tRNA N6-adenosine threonylcarbamoyltransferase.